Here is a 1170-residue protein sequence, read N- to C-terminus: Type I restriction enzyme EcoKI endonuclease subunit (1170 aa).

Positions Tyr143–Ile229 form a coiled coil. The segment at residues Asn431–Glu450 is a DNA-binding region (H-T-H motif). The Helicase ATP-binding domain occupies Lys458–Arg639. ATP is bound at residue Ala472 to Thr478. Residues Asp574–His577 carry the DEAH box motif. One can recognise a Helicase C-terminal domain in the interval Glu714–Glu879.

It belongs to the HsdR family. In terms of assembly, the type I restriction/modification system is composed of three polypeptides R, M and S. The restriction enzyme has stoichiometry R(2)M(2)S(1). The methyltransferase is composed of M(2)S(1). (Microbial infection) Interacts with Escherichia phage T7 protein Ocr; this interaction leads to the inhibition of the type I bifunctional endonuclease and methyltransferase restriction enzyme R.EcoKI composed of R(2)M(2)S(1). In terms of processing, upon purification after overexpression about one-third has the initiating methionine removed.

It carries out the reaction Endonucleolytic cleavage of DNA to give random double-stranded fragments with terminal 5'-phosphates, ATP is simultaneously hydrolyzed.. Functionally, the subtype A restriction (R) subunit of a type I restriction enzyme that recognizes 5'-AACN(6)GTGC-3' and cleaves a random distance away. The R subunit is required for both endonuclease and ATPase activities but not for modification. Has endonucleolytic activity that requires Mg(2+), ATP and S-adenosyl-L-methionine (SAM); ATP can be replaced by dATP, no tested molecule could substitute for SAM. Generates double-stranded DNA with no nicks, by cutting one strand then the other within a few seconds. Cleaves only non-methylated DNA, hemi-methylated and fully methylated DNA are not substrates. After locating a non-methylated recognition site, the enzyme complex serves as a molecular motor that translocates DNA in an ATP-dependent manner until a collision occurs that triggers cleavage. This is Type I restriction enzyme EcoKI endonuclease subunit from Escherichia coli (strain K12).